The following is a 322-amino-acid chain: 26S proteasome non-ATPase regulatory subunit 7 (322 aa).

The 136-residue stretch at 9-144 folds into the MPN domain; the sequence is VVVHPLVLLS…TEAYISVEEV (136 aa). Lys180 is covalently cross-linked (Glycyl lysine isopeptide (Lys-Gly) (interchain with G-Cter in ubiquitin)). N6-acetyllysine is present on residues Lys204, Lys214, Lys314, and Lys315. Residues 281–322 form a disordered region; the sequence is ANRDAEKKEGQEKEDSKKDRKDDKEKEKEKSDVKKEEKKEKK.

It belongs to the peptidase M67A family. In terms of assembly, component of the 19S proteasome regulatory particle complex. The 26S proteasome consists of a 20S core particle (CP) and two 19S regulatory subunits (RP). The regulatory particle is made of a lid composed of 9 subunits including PSMD7, a base containing 6 ATPases and few additional components. Within the complex, PSMD7 interacts with subunit PSMD4 through their respective MPN domain. Interacts with TRIM5.

In terms of biological role, component of the 26S proteasome, a multiprotein complex involved in the ATP-dependent degradation of ubiquitinated proteins. This complex plays a key role in the maintenance of protein homeostasis by removing misfolded or damaged proteins, which could impair cellular functions, and by removing proteins whose functions are no longer required. Therefore, the proteasome participates in numerous cellular processes, including cell cycle progression, apoptosis, or DNA damage repair. This is 26S proteasome non-ATPase regulatory subunit 7 (PSMD7) from Bos taurus (Bovine).